Reading from the N-terminus, the 450-residue chain is Bifunctional protein GlmU (450 aa).

The tract at residues 1 to 226 (MLAVAVLAAG…PDEVNGINNR (226 aa)) is pyrophosphorylase. UDP-N-acetyl-alpha-D-glucosamine is bound by residues 7–10 (LAAG), K21, Q73, and 78–79 (GT). Residue D103 coordinates Mg(2+). UDP-N-acetyl-alpha-D-glucosamine contacts are provided by G140, E155, N170, and N224. Residue N224 coordinates Mg(2+). A linker region spans residues 227–247 (QQLAQCETMLQERLRHHWMAE). The interval 248–450 (GVTFVDPASC…IKENWAGPQG (203 aa)) is N-acetyltransferase. 2 residues coordinate UDP-N-acetyl-alpha-D-glucosamine: R329 and K347. H359 functions as the Proton acceptor in the catalytic mechanism. Positions 362 and 373 each coordinate UDP-N-acetyl-alpha-D-glucosamine. Acetyl-CoA-binding positions include A376, 382 to 383 (NY), A419, and R436.

It in the N-terminal section; belongs to the N-acetylglucosamine-1-phosphate uridyltransferase family. The protein in the C-terminal section; belongs to the transferase hexapeptide repeat family. In terms of assembly, homotrimer. The cofactor is Mg(2+).

The protein localises to the cytoplasm. The enzyme catalyses alpha-D-glucosamine 1-phosphate + acetyl-CoA = N-acetyl-alpha-D-glucosamine 1-phosphate + CoA + H(+). The catalysed reaction is N-acetyl-alpha-D-glucosamine 1-phosphate + UTP + H(+) = UDP-N-acetyl-alpha-D-glucosamine + diphosphate. It functions in the pathway nucleotide-sugar biosynthesis; UDP-N-acetyl-alpha-D-glucosamine biosynthesis; N-acetyl-alpha-D-glucosamine 1-phosphate from alpha-D-glucosamine 6-phosphate (route II): step 2/2. It participates in nucleotide-sugar biosynthesis; UDP-N-acetyl-alpha-D-glucosamine biosynthesis; UDP-N-acetyl-alpha-D-glucosamine from N-acetyl-alpha-D-glucosamine 1-phosphate: step 1/1. The protein operates within bacterial outer membrane biogenesis; LPS lipid A biosynthesis. In terms of biological role, catalyzes the last two sequential reactions in the de novo biosynthetic pathway for UDP-N-acetylglucosamine (UDP-GlcNAc). The C-terminal domain catalyzes the transfer of acetyl group from acetyl coenzyme A to glucosamine-1-phosphate (GlcN-1-P) to produce N-acetylglucosamine-1-phosphate (GlcNAc-1-P), which is converted into UDP-GlcNAc by the transfer of uridine 5-monophosphate (from uridine 5-triphosphate), a reaction catalyzed by the N-terminal domain. In Synechococcus sp. (strain RCC307), this protein is Bifunctional protein GlmU.